The following is a 150-amino-acid chain: Transthyretin (150 aa).

A signal peptide spans 1-20; sequence MAFHSTLLVFLAGLVFLSEA. C33 bears the Sulfocysteine mark. K38, E77, and S140 together coordinate L-thyroxine.

It belongs to the transthyretin family. In terms of assembly, homotetramer. Dimer of dimers. In the homotetramer, subunits assemble around a central channel that can accommodate two ligand molecules. Sulfonation of the reactive cysteine Cys-33 enhances the stability of the native conformation of TTR, avoiding misassembly of the protein leading to amyloid formation. As to expression, detected in serum (at protein level). Detected in liver and choroid plexus.

It localises to the secreted. Functionally, thyroid hormone-binding protein. Probably transports thyroxine from the bloodstream to the brain. The sequence is that of Transthyretin (TTR) from Gallus gallus (Chicken).